The following is a 347-amino-acid chain: NADH-ubiquinone oxidoreductase chain 2 (347 aa).

A run of 11 helical transmembrane segments spans residues 3-23 (PLIF…VMTT), 25-45 (HWVM…PILM), 59-79 (YFLT…INLT), 96-116 (IIMT…FWVP), 122-142 (VQLS…MSIL), 149-169 (INLD…GWGG), 178-198 (ILAY…VYNP), 201-221 (ALLN…MLMV), 237-257 (MPLL…LPPL), 274-294 (DSMI…YFYM), and 326-346 (LSPL…LALL).

The protein belongs to the complex I subunit 2 family. As to quaternary structure, core subunit of respiratory chain NADH dehydrogenase (Complex I) which is composed of 45 different subunits. Interacts with TMEM242.

It localises to the mitochondrion inner membrane. It catalyses the reaction a ubiquinone + NADH + 5 H(+)(in) = a ubiquinol + NAD(+) + 4 H(+)(out). Core subunit of the mitochondrial membrane respiratory chain NADH dehydrogenase (Complex I) which catalyzes electron transfer from NADH through the respiratory chain, using ubiquinone as an electron acceptor. Essential for the catalytic activity and assembly of complex I. The sequence is that of NADH-ubiquinone oxidoreductase chain 2 from Nyctimene aello (Broad-striped tube-nosed fruit bat).